The chain runs to 360 residues: Meiosis-inducing protein 1 (360 aa).

Positions S102–L135 are disordered. Over residues S126–L135 the composition is skewed to low complexity.

As to quaternary structure, interacts with UME6.

The protein resides in the nucleus. Transcription factor required for sporulation and for early sporulation-specific genes expression. Positive regulator of SME1/IME2 expression. Directly activates expression of SLZ1 during meiosis. This chain is Meiosis-inducing protein 1 (IME1), found in Saccharomyces cerevisiae (strain ATCC 204508 / S288c) (Baker's yeast).